We begin with the raw amino-acid sequence, 157 residues long: MKKYIFFFLFSFINFFFVYDVTCTKEVTSTNDDPLTPLNRFDKYYLRMFKKVPRLQQNGSNIINGVNMKNTVIVLYFFAKWCQACTMQSTEMDKLQKYYGKRIYLLKVDLDKNESLARKFSVKSLPTIILLKNKTMLARKDHFVSSNDLIALIKKHL.

Residues 1–23 (MKKYIFFFLFSFINFFFVYDVTC) form the signal peptide. The Thioredoxin domain maps to 46 to 157 (LRMFKKVPRL…DLIALIKKHL (112 aa)). Active-site nucleophile residues include cysteine 82 and cysteine 85. A disulfide bond links cysteine 82 and cysteine 85.

Belongs to the thioredoxin family. In terms of assembly, monomer. Component of the Plasmodium translocon of exported proteins (PTEX) complex composed of HSP101, EXP2, PTEX150, PTEX88 and TRX2. In terms of processing, the disulfide bond between Cys-82 and Cys-85 acts as a redox-active center and is reduced by thioredoxin reductase TRXR.

It localises to the parasitophorous vacuole membrane. In terms of biological role, participates in various redox reactions through the reversible oxidation of its active center dithiol to a disulfide and catalyzes dithiol-disulfide exchange reactions. As part of the translocon PTEX complex, plays a role in the export of parasite proteins into the host erythrocyte. The translocon PTEX complex is a multi-protein machinery resident in the parasite parasitophorous vacuolar membrane, responsible for protein secretion into host cells. May contribute to the unfolding of proteins containing the PEXEL localization motif before their passage through the translocon or regulate the PTEX complex function. This Plasmodium falciparum (isolate 3D7) protein is Thioredoxin 2.